Reading from the N-terminus, the 615-residue chain is Zinc metalloproteinase-disintegrin-like (615 aa).

An N-terminal signal peptide occupies residues 1 to 20 (MIQALLVTICLVGFPHQGSS). Positions 21–195 (IILESGNVKD…KMNFQSANNP (175 aa)) are excised as a propeptide. The Peptidase M12B domain maps to 204-400 (KYIKLAVVVD…DLPQCILNKP (197 aa)). Cystine bridges form between Cys-315/Cys-395, Cys-355/Cys-379, and Cys-357/Cys-362. Residue His-340 coordinates Zn(2+). Residue Glu-341 is part of the active site. Zn(2+)-binding residues include His-344 and His-350. The region spanning 408-494 (PAVCGNNFVE…DCPMDGLQRN (87 aa)) is the Disintegrin domain. Positions 410, 413, 415, 417, and 423 each coordinate Ca(2+). 14 cysteine pairs are disulfide-bonded: Cys-411/Cys-440, Cys-422/Cys-435, Cys-424/Cys-430, Cys-434/Cys-457, Cys-448/Cys-454, Cys-453/Cys-479, Cys-466/Cys-486, Cys-473/Cys-505, Cys-498/Cys-510, Cys-517/Cys-567, Cys-532/Cys-576, Cys-545/Cys-555, Cys-562/Cys-602, and Cys-596/Cys-608. The short motif at 472–474 (DCD) is the D/ECD-tripeptide element.

It belongs to the venom metalloproteinase (M12B) family. P-III subfamily. P-IIIa sub-subfamily. As to quaternary structure, monomer. It depends on Zn(2+) as a cofactor. As to expression, expressed by the venom gland.

The protein localises to the secreted. Functionally, snake venom zinc metalloprotease that may induce platelet aggregation. The chain is Zinc metalloproteinase-disintegrin-like from Cerberus rynchops (Dog-faced water snake).